We begin with the raw amino-acid sequence, 167 residues long: Peptide deformylase (167 aa).

Cys-91 and His-133 together coordinate Fe cation. The active site involves Glu-134. His-137 provides a ligand contact to Fe cation.

The protein belongs to the polypeptide deformylase family. Fe(2+) is required as a cofactor.

It carries out the reaction N-terminal N-formyl-L-methionyl-[peptide] + H2O = N-terminal L-methionyl-[peptide] + formate. Its function is as follows. Removes the formyl group from the N-terminal Met of newly synthesized proteins. Requires at least a dipeptide for an efficient rate of reaction. N-terminal L-methionine is a prerequisite for activity but the enzyme has broad specificity at other positions. The protein is Peptide deformylase of Neisseria meningitidis serogroup C (strain 053442).